A 271-amino-acid polypeptide reads, in one-letter code: MIRFLILAGYFELGMYLQLSGKLDRYINSHYSYLAYISMALSFILALVQLTIWMKRLKMHSHLSGKAAKFFSPIILAIPVFIGLLVPTVPLDSTTVSAKGYHFPLAAGSTTSGTSSDGTRVQYLKPDTSLYFTKSAYQKEMRATLKKYKGSGKLQITTQNYMEVMEIIYLFPDEFKNRQIEYVGFIYNDPKDKNSQFLFRFGIIHCIADSGVYGLLTTGGQTHYQNNTWVTVSGKLAIEYNQNLKQTLPVLHISQSSQTMQPKNPYVYRVF.

A run of 2 helical transmembrane segments spans residues 34 to 54 (LAYI…TIWM) and 70 to 90 (FFSP…PTVP).

It belongs to the UPF0703 family. Interacts with SMU_747c.

It localises to the cell membrane. Could be part of a two-component membrane permease system responsible for amino acid transport under low pH. Involved in acidogenesis, biofilm formation and low-pH survival. The chain is Putative two-component membrane permease complex subunit SMU_746c from Streptococcus mutans serotype c (strain ATCC 700610 / UA159).